The primary structure comprises 159 residues: uncharacterized protein (159 aa).

This is an uncharacterized protein from Acanthamoeba polyphaga (Amoeba).